The chain runs to 123 residues: Large ribosomal subunit protein bL21 (123 aa).

The protein belongs to the bacterial ribosomal protein bL21 family. Part of the 50S ribosomal subunit. Contacts protein L20.

In terms of biological role, this protein binds to 23S rRNA in the presence of protein L20. In Rhizobium meliloti (strain 1021) (Ensifer meliloti), this protein is Large ribosomal subunit protein bL21.